The following is a 469-amino-acid chain: Neuraminidase (469 aa).

The Intravirion segment spans residues 1 to 6 (MNPNQK). Residues 7-27 (IITIGSICMVVGIISLILQIG) traverse the membrane as a helical segment. Positions 11 to 33 (GSICMVVGIISLILQIGNIISIW) are involved in apical transport and lipid raft association. At 28–469 (NIISIWISHS…GAELPFTIDK (442 aa)) the chain is on the virion surface side. The interval 36–90 (HSIQTGSQNHTGTCNQSIITYKNSTWVNQTYVNISNTNVVAGKDTTSVILAGNSS) is hypervariable stalk region. 6 N-linked (GlcNAc...) asparagine; by host glycosylation sites follow: Asn44, Asn50, Asn58, Asn63, Asn68, and Asn88. The tract at residues 91–469 (LCPIRGWAIY…GAELPFTIDK (379 aa)) is head of neuraminidase. 8 disulfides stabilise this stretch: Cys92–Cys417, Cys124–Cys129, Cys184–Cys231, Cys233–Cys238, Cys279–Cys292, Cys281–Cys290, Cys318–Cys335, and Cys421–Cys446. Arg118 contacts substrate. N-linked (GlcNAc...) asparagine; by host glycosylation is present at Asn146. Asp151 functions as the Proton donor/acceptor in the catalytic mechanism. Arg152 provides a ligand contact to substrate. Asn235 is a glycosylation site (N-linked (GlcNAc...) asparagine; by host). A substrate-binding site is contributed by 277-278 (EE). Residue Arg293 coordinates substrate. Asp294, Gly298, Asp324, and Asn344 together coordinate Ca(2+). Asn365 carries an N-linked (GlcNAc...) asparagine; by host glycan. Arg368 serves as a coordination point for substrate. The active-site Nucleophile is the Tyr402.

Belongs to the glycosyl hydrolase 34 family. As to quaternary structure, homotetramer. Requires Ca(2+) as cofactor. Post-translationally, N-glycosylated.

Its subcellular location is the virion membrane. The protein resides in the host apical cell membrane. The catalysed reaction is Hydrolysis of alpha-(2-&gt;3)-, alpha-(2-&gt;6)-, alpha-(2-&gt;8)- glycosidic linkages of terminal sialic acid residues in oligosaccharides, glycoproteins, glycolipids, colominic acid and synthetic substrates.. With respect to regulation, inhibited by the neuraminidase inhibitors zanamivir (Relenza) and oseltamivir (Tamiflu). These drugs interfere with the release of progeny virus from infected cells and are effective against all influenza strains. Resistance to neuraminidase inhibitors is quite rare. Its function is as follows. Catalyzes the removal of terminal sialic acid residues from viral and cellular glycoconjugates. Cleaves off the terminal sialic acids on the glycosylated HA during virus budding to facilitate virus release. Additionally helps virus spread through the circulation by further removing sialic acids from the cell surface. These cleavages prevent self-aggregation and ensure the efficient spread of the progeny virus from cell to cell. Otherwise, infection would be limited to one round of replication. Described as a receptor-destroying enzyme because it cleaves a terminal sialic acid from the cellular receptors. May facilitate viral invasion of the upper airways by cleaving the sialic acid moieties on the mucin of the airway epithelial cells. Likely to plays a role in the budding process through its association with lipid rafts during intracellular transport. May additionally display a raft-association independent effect on budding. Plays a role in the determination of host range restriction on replication and virulence. Sialidase activity in late endosome/lysosome traffic seems to enhance virus replication. The protein is Neuraminidase of Aves (Human).